A 591-amino-acid polypeptide reads, in one-letter code: Aspartate--tRNA(Asp/Asn) ligase (591 aa).

Residue Glu-176 participates in L-aspartate binding. The aspartate stretch occupies residues 200–203 (QLFK). Residue Arg-222 coordinates L-aspartate. Residues 222 to 224 (RDE) and Gln-231 each bind ATP. His-450 contacts L-aspartate. Glu-484 contributes to the ATP binding site. Arg-491 serves as a coordination point for L-aspartate. 536–539 (GLDR) contacts ATP.

Belongs to the class-II aminoacyl-tRNA synthetase family. Type 1 subfamily. Homodimer.

The protein resides in the cytoplasm. The enzyme catalyses tRNA(Asx) + L-aspartate + ATP = L-aspartyl-tRNA(Asx) + AMP + diphosphate. Aspartyl-tRNA synthetase with relaxed tRNA specificity since it is able to aspartylate not only its cognate tRNA(Asp) but also tRNA(Asn). Reaction proceeds in two steps: L-aspartate is first activated by ATP to form Asp-AMP and then transferred to the acceptor end of tRNA(Asp/Asn). This chain is Aspartate--tRNA(Asp/Asn) ligase, found in Bacillus cereus (strain AH187).